The chain runs to 300 residues: Secreted mono- and diacylglycerol lipase LIP4 (300 aa).

The N-terminal stretch at 1–16 (MRFLAFLLCLVPLALC) is a signal peptide. C54 and C293 are oxidised to a cystine. The active-site Nucleophile is the S167. D224 is a catalytic residue.

Belongs to the AB hydrolase superfamily. Lipase family. Class 3 subfamily.

It is found in the secreted. The catalysed reaction is a monoacylglycerol + H2O = glycerol + a fatty acid + H(+). It catalyses the reaction a diacylglycerol + H2O = a monoacylglycerol + a fatty acid + H(+). Secreted lipase involved in Dandruff and seborrheic dermatitis (D/SD) probably via lipase-mediated breakdown of sebaceous lipids and release of irritating free fatty acids. Shows activity against monoglyceride and diglyceride substrates. Due to an absence of fatty acid synthase genes in Malassezia species, secretory lipases are essential for the yeast to generate free fatty acids from degradation of sebum and assimilate them as lipid sources for growth. Plays an essential role at the pathogen-host interface during disease progression. The sequence is that of Secreted mono- and diacylglycerol lipase LIP4 from Malassezia restricta (Seborrheic dermatitis infection agent).